We begin with the raw amino-acid sequence, 218 residues long: Protein N-lysine methyltransferase METTL21A (218 aa).

S-adenosyl-L-methionine is bound by residues Trp47, 73-75 (GAG), Asp94, Trp125, and Ala143.

It belongs to the methyltransferase superfamily. METTL21 family. In terms of assembly, interacts with heat shock 70 family members; at least some of these proteins are methylation substrates.

Its subcellular location is the cytoplasm. The catalysed reaction is L-lysyl-[protein] + 3 S-adenosyl-L-methionine = N(6),N(6),N(6)-trimethyl-L-lysyl-[protein] + 3 S-adenosyl-L-homocysteine + 3 H(+). Functionally, protein-lysine methyltransferase that selectively trimethylates residues in heat shock protein 70 (HSP70) family members. Contributes to the in vivo trimethylation of Lys residues in HSPA1 and HSPA8. In vitro methylates 'Lys-561' in HSPA1, 'Lys-564' in HSPA2, 'Lys-585' in HSPA5, 'Lys-563' in HSPA6 and 'Lys-561' in HSPA8. The polypeptide is Protein N-lysine methyltransferase METTL21A (Mettl21A) (Mus musculus (Mouse)).